The sequence spans 392 residues: INCREASED PETAL GROWTH ANISOTROPY 1-like protein 1 (392 aa).

Residues 11–52 adopt a coiled-coil conformation; the sequence is LLRLVKELQAYLVRNDKLEKENHELRQEVARLRAQVSNLKSH. Polar residues-rich tracts occupy residues 65–76 and 100–109; these read QSSYDGSNTDGS and PTIQGQSTAT. The tract at residues 65 to 128 is disordered; sequence QSSYDGSNTD…SKRTLGKRSV (64 aa). Residues 269–299 are a coiled coil; that stretch reads KDSLTQALQRIQSLQDRLEESVNNTEKMRDS.

It belongs to the IPGA1 family.

It is found in the cytoplasm. It localises to the cytoskeleton. Functionally, microtubule-associated protein probably involved in the regulation of microtubule organization. This is INCREASED PETAL GROWTH ANISOTROPY 1-like protein 1 from Arabidopsis thaliana (Mouse-ear cress).